Consider the following 121-residue polypeptide: Small ribosomal subunit protein uS13 (121 aa).

The tract at residues 96-121 (PVRGQNTKNNARTRKGKAVAIAGKKK) is disordered. Positions 106 to 121 (ARTRKGKAVAIAGKKK) are enriched in basic residues.

Belongs to the universal ribosomal protein uS13 family. Part of the 30S ribosomal subunit. Forms a loose heterodimer with protein S19. Forms two bridges to the 50S subunit in the 70S ribosome.

Located at the top of the head of the 30S subunit, it contacts several helices of the 16S rRNA. In the 70S ribosome it contacts the 23S rRNA (bridge B1a) and protein L5 of the 50S subunit (bridge B1b), connecting the 2 subunits; these bridges are implicated in subunit movement. Contacts the tRNAs in the A and P-sites. This is Small ribosomal subunit protein uS13 from Streptococcus pneumoniae serotype 4 (strain ATCC BAA-334 / TIGR4).